A 115-amino-acid polypeptide reads, in one-letter code: Ustilagic acid biosynthesis cluster protein orf3 (115 aa).

The N-terminal stretch at 1 to 38 is a signal peptide; that stretch reads MTYSKIACSLGKRGIARAPNQASSFFLLLFLFAKFSQQ. The tract at residues 42-62 is disordered; that stretch reads SPCLASSGVAKSRGPASTDRP.

Its pathway is secondary metabolite biosynthesis. Its function is as follows. Part of the gene cluster that mediates the biosynthesis of the glycolipid biosurfactant ustilagic acid (UA). UA is a secreted cellobiose glycolipid that is toxic for many microorganisms and confers biocontrol activity to U.maydis. UA consists of 15,16-dihydroxypalmitic or 2,15,16-trihydroxypalmitic acid, which is O-glycosidically linked to cellobiose at its terminal hydroxyl group. In addition, the cellobiose moiety is acetylated and acylated with a short-chain hydroxy fatty acid. UA biosynthesis starts with omega-hydroxylation of palmitic acid catalyzed by the cytochrome P450 monooxygenase cyp1. Terminal hydroxylation of palmitic acid precedes subterminal hydroxylation catalyzed by the cytochrome P450 monooxygenase cyp2. Sequential glucosylation of the hydroxy fatty acid is probably catalyzed by the glycosyltransferase ugt1. The cellobiose lipid is further decorated by acetylation of the proximal glucose residue and by acylation with a short-chain beta-hydroxy fatty acid at the distal glucose residue. The acyltransferase uat1 may be a good candidate for catalyzing either acetylation or acylation of the cellobiose lipid. The fatty acid synthase fas2 may be involved in synthesis of the carbon backbone of the short-chain beta-hydroxy fatty acid esterified to the cellobiose disaccharide. The secreted UA consists of a mixture of both alpha-hydroxylated and non-hydroxylated glycolipids; therefore, alpha-hydroxylation of the long-chain fatty, catalyzed by the fatty acid hydroxylase ahd1, occurs late in UA biosynthesis and may be the last step before secretion. The protein is Ustilagic acid biosynthesis cluster protein orf3 of Mycosarcoma maydis (Corn smut fungus).